We begin with the raw amino-acid sequence, 426 residues long: Diaminobutyrate--2-oxoglutarate transaminase (426 aa).

The residue at position 272 (K272) is an N6-(pyridoxal phosphate)lysine.

It belongs to the class-III pyridoxal-phosphate-dependent aminotransferase family. Pyridoxal 5'-phosphate is required as a cofactor.

The catalysed reaction is L-2,4-diaminobutanoate + 2-oxoglutarate = L-aspartate 4-semialdehyde + L-glutamate. It participates in amine and polyamine biosynthesis; ectoine biosynthesis; L-ectoine from L-aspartate 4-semialdehyde: step 1/3. Catalyzes reversively the conversion of L-aspartate beta-semialdehyde (ASA) to L-2,4-diaminobutyrate (DABA) by transamination with L-glutamate. This chain is Diaminobutyrate--2-oxoglutarate transaminase (ectB), found in Sporosarcina pasteurii (Bacillus pasteurii).